Here is a 346-residue protein sequence, read N- to C-terminus: D-erythrose-4-phosphate dehydrogenase (346 aa).

Arginine 11–isoleucine 12 provides a ligand contact to NAD(+). Substrate-binding positions include serine 163–threonine 165, arginine 209, threonine 222–lysine 223, and arginine 245. The active-site Nucleophile is the cysteine 164. Asparagine 327 is a binding site for NAD(+).

Belongs to the glyceraldehyde-3-phosphate dehydrogenase family. Epd subfamily. Homotetramer.

The protein resides in the cytoplasm. It carries out the reaction D-erythrose 4-phosphate + NAD(+) + H2O = 4-phospho-D-erythronate + NADH + 2 H(+). It participates in cofactor biosynthesis; pyridoxine 5'-phosphate biosynthesis; pyridoxine 5'-phosphate from D-erythrose 4-phosphate: step 1/5. Its function is as follows. Catalyzes the NAD-dependent conversion of D-erythrose 4-phosphate to 4-phosphoerythronate. The chain is D-erythrose-4-phosphate dehydrogenase from Vibrio vulnificus (strain CMCP6).